We begin with the raw amino-acid sequence, 443 residues long: Probable D-serine dehydratase (443 aa).

K118 is modified (N6-(pyridoxal phosphate)lysine).

It belongs to the serine/threonine dehydratase family. DsdA subfamily. The cofactor is pyridoxal 5'-phosphate.

It carries out the reaction D-serine = pyruvate + NH4(+). The protein is Probable D-serine dehydratase of Aeromonas hydrophila subsp. hydrophila (strain ATCC 7966 / DSM 30187 / BCRC 13018 / CCUG 14551 / JCM 1027 / KCTC 2358 / NCIMB 9240 / NCTC 8049).